Reading from the N-terminus, the 609-residue chain is Beta-(1--&gt;2)glucan export ATP-binding/permease protein NdvA (609 aa).

Positions 21-311 (GWILAGANLL…VVSFINSVFM (291 aa)) constitute an ABC transmembrane type-1 domain. Helical transmembrane passes span 22–42 (WILA…PVLF), 68–88 (LLAV…TVAL), 146–166 (EHFA…YINW), 167–187 (RLAI…TLVV), 248–268 (WWAV…LAIF), and 285–305 (IVMF…VVSF). Residues 345–579 (VEFNDVSFSY…GGHFAQLAKA (235 aa)) form the ABC transporter domain. ATP is bound at residue 378–385 (GPTGAGKS).

The protein belongs to the ABC transporter superfamily. Beta-(1--&gt;2)glucan exporter (TC 3.A.1.108.1) family. Homodimer.

It is found in the cell inner membrane. The enzyme catalyses [(1-&gt;2)-beta-D-glucosyl](n)(in) + ATP + H2O = [(1-&gt;2)-beta-D-glucosyl](n)(out) + ADP + phosphate + H(+). In terms of biological role, involved in beta-(1--&gt;2)glucan export. Transmembrane domains (TMD) form a pore in the inner membrane and the ATP-binding domain (NBD) is responsible for energy generation. The sequence is that of Beta-(1--&gt;2)glucan export ATP-binding/permease protein NdvA from Nitrobacter winogradskyi (strain ATCC 25391 / DSM 10237 / CIP 104748 / NCIMB 11846 / Nb-255).